The sequence spans 432 residues: Enolase (432 aa).

Residue Gln-167 coordinates (2R)-2-phosphoglycerate. Glu-209 functions as the Proton donor in the catalytic mechanism. 3 residues coordinate Mg(2+): Asp-246, Glu-289, and Asp-316. (2R)-2-phosphoglycerate-binding residues include Lys-341, Arg-370, Ser-371, and Lys-392. The Proton acceptor role is filled by Lys-341.

Belongs to the enolase family. The cofactor is Mg(2+).

It localises to the cytoplasm. Its subcellular location is the secreted. The protein localises to the cell surface. The catalysed reaction is (2R)-2-phosphoglycerate = phosphoenolpyruvate + H2O. Its pathway is carbohydrate degradation; glycolysis; pyruvate from D-glyceraldehyde 3-phosphate: step 4/5. Its function is as follows. Catalyzes the reversible conversion of 2-phosphoglycerate (2-PG) into phosphoenolpyruvate (PEP). It is essential for the degradation of carbohydrates via glycolysis. This chain is Enolase, found in Thermotoga neapolitana (strain ATCC 49049 / DSM 4359 / NBRC 107923 / NS-E).